A 113-amino-acid chain; its full sequence is MHEMSIAEGIVQLLEEQAVAQDFTRVRALWLEIGPLAAIEVESLRFCFEAVTRGSLAEGARLEIVELPGRAWCLGCNASVAIRRRYDACPQCGSHRLQVTQGDELRVKELEVE.

Histidine 2 lines the Ni(2+) pocket. The Zn(2+) site is built by cysteine 73, cysteine 76, cysteine 89, and cysteine 92.

This sequence belongs to the HypA/HybF family.

Functionally, involved in the maturation of [NiFe] hydrogenases. Required for nickel insertion into the metal center of the hydrogenase. The protein is Hydrogenase maturation factor HypA of Azotobacter vinelandii.